A 550-amino-acid polypeptide reads, in one-letter code: Leiomodin-2 (550 aa).

Positions 1–47 are interaction with tropomyosin alpha; the sequence is MSTFGYRRGLSKYESIDEDELLASLSPEELKELERELEDIEPDRNLP. Interaction with actin regions lie at residues 1-165, 166-500, and 524-543; these read MSTF…TDNS, KPKT…KEIK, and VHEN…LRRV. Phosphoserine is present on residues serine 11, serine 15, and serine 24. Residues 84 to 94 show a composition bias toward basic and acidic residues; sequence ERLGECGKVAE. 2 disordered regions span residues 84–202 and 359–527; these read ERLG…PCGN and MDKQ…VHEN. Residues 91 to 147 are a coiled coil; the sequence is KVAEEDKEESEEELIFTESNSEVSEEVCTEDEEESQEEEEDSEEEEDSEEEEETTEA. 2 stretches are compositionally biased toward acidic residues: residues 95 to 105 and 113 to 145; these read EDKEESEEELI and VSEE…EETT. 2 stretches are compositionally biased toward polar residues: residues 151–164 and 170–193; these read INGT…NTDN and FKSQ…NSES. A compositionally biased stretch (basic and acidic residues) spans 359 to 377; that stretch reads MDKQRQKRMQEQKQQEGHD. Residues 391-402 are compositionally biased toward polar residues; it reads TPGSSPYASPRQ. Serine 407 carries the phosphoserine modification. Over residues 421 to 452 the composition is skewed to pro residues; sequence PPSPVAPPPPPPPPPLPPHMLPPPPPPPAPPL. The span at 468–479 shows a compositional bias: polar residues; the sequence is QQESAQRALQNG. The segment covering 480-490 has biased composition (basic residues); sequence QRKKKGKKVKK. A compositionally biased stretch (basic and acidic residues) spans 497–515; the sequence is KEIKNSLRSVQEKKMEDSS. Positions 524 to 543 constitute a WH2 domain; it reads VHENLMEAIRGSSIRQLRRV.

This sequence belongs to the tropomodulin family. As to quaternary structure, can bind at least three actin monomers and thereby provides a nucleus for actin filament formation. Interacts (via N-terminus) with tropomyosin alpha (TPM1) (via N-terminus). May also interact with TPM2 (via N-terminus). Interacts with FLII. In terms of tissue distribution, detected in neonate heart (at protein level). Detected in embryonic heart and in pharyngeal arches. Detected in adult heart.

It localises to the cytoplasm. Its subcellular location is the myofibril. The protein resides in the sarcomere. The protein localises to the m line. It is found in the cytoskeleton. Mediates nucleation of actin filaments and thereby promotes actin polymerization. Plays a role in the regulation of actin filament length. Required for normal sarcomere organization in the heart, and for normal heart function. The sequence is that of Leiomodin-2 (Lmod2) from Mus musculus (Mouse).